Here is a 146-residue protein sequence, read N- to C-terminus: Cytochrome b5 type B (146 aa).

Residues 1–11 (MATPEASGSGE) constitute a propeptide that is removed on maturation. The residue at position 19 (S19) is a Phosphoserine. One can recognise a Cytochrome b5 heme-binding domain in the interval 20–96 (VTYYRLEEVA…LKQYYIGDVH (77 aa)). K30 carries the post-translational modification N6-acetyllysine. The residue at position 33 (S33) is a Phosphoserine. Positions 55 and 79 each coordinate heme. Position 80 is a phosphoserine (S80). A helical membrane pass occupies residues 119–136 (WAYWFVPIVGAILIGFLY).

This sequence belongs to the cytochrome b5 family. Component of a complex composed of cytochrome b5, NADH-cytochrome b5 reductase (CYB5R3) and MTARC2.

The protein resides in the mitochondrion outer membrane. Functionally, cytochrome b5 is a membrane-bound hemoprotein functioning as an electron carrier for several membrane-bound oxygenases. This is Cytochrome b5 type B (Cyb5b) from Mus musculus (Mouse).